A 586-amino-acid polypeptide reads, in one-letter code: Maltogenic alpha-amylase (586 aa).

Residues asparagine 147, asparagine 152, aspartate 153, glycine 172, and aspartate 174 each coordinate Ca(2+). Substrate contacts are provided by histidine 247 and arginine 326. Aspartate 328 functions as the Nucleophile in the catalytic mechanism. Glutamate 357 (proton donor) is an active-site residue. Substrate is bound by residues 423–424 (HD), aspartate 468, and arginine 472.

The protein belongs to the glycosyl hydrolase 13 family. Ca(2+) is required as a cofactor.

The enzyme catalyses hydrolysis of (1-&gt;4)-alpha-D-glucosidic linkages in polysaccharides so as to remove successive alpha-maltose residues from the non-reducing ends of the chains.. Converts starch into maltose. The protein is Maltogenic alpha-amylase of Bacillus acidopullulyticus.